A 409-amino-acid chain; its full sequence is MIRSNPHYEKLRSSYLFSDIAKRVAAHQESHPGVDIIRLGIGDVTHALPDACVAAFHRGVDEMANDATFRGYGPEQGYAFLREKIASEDFKARGADIDSDEIFVSDGAKCDTGNFQELFSTDIRIAIPDPVYPVYLDTNVMAGRTGEFKDGRYGGVSYMDCTAENNFVPDLPQEQVDLIYLCFPNNPTGTTITKPELKRWVDYAHEAKALILFDAAYEAFIRDDTLPRSIYEIEGAKEVAVEFRSFSKTAGFTGTRCAYTVVPKACRVFDQKGAAIALHPLWNRRHTTKFNGVSYPVQRAAEAVYSTEGKAQVKALADGYLDNAGIIRRAMDTMGFDCVGGIDSPYVWINGNGRDSWAFFDLLLKKAGVVCTPGTGFGQCGEGYIRISAFNSREKVETAMARMKEALGS.

Substrate-binding residues include Tyr-15 and Gly-42. Residues Tyr-72, 108–109, Tyr-132, Asn-186, Tyr-217, and 245–247 contribute to the pyridoxal 5'-phosphate site; these read AK and SFS. Residues Lys-109, Tyr-132, and Asn-186 each contribute to the substrate site. Lys-248 bears the N6-(pyridoxal phosphate)lysine mark. Pyridoxal 5'-phosphate contacts are provided by Arg-256 and Asn-291. Residues Asn-291 and Arg-386 each contribute to the substrate site.

This sequence belongs to the class-I pyridoxal-phosphate-dependent aminotransferase family. LL-diaminopimelate aminotransferase subfamily. In terms of assembly, homodimer. Requires pyridoxal 5'-phosphate as cofactor.

The enzyme catalyses (2S,6S)-2,6-diaminopimelate + 2-oxoglutarate = (S)-2,3,4,5-tetrahydrodipicolinate + L-glutamate + H2O + H(+). The protein operates within amino-acid biosynthesis; L-lysine biosynthesis via DAP pathway; LL-2,6-diaminopimelate from (S)-tetrahydrodipicolinate (aminotransferase route): step 1/1. Involved in the synthesis of meso-diaminopimelate (m-DAP or DL-DAP), required for both lysine and peptidoglycan biosynthesis. Catalyzes the direct conversion of tetrahydrodipicolinate to LL-diaminopimelate. This is LL-diaminopimelate aminotransferase from Desulforapulum autotrophicum (strain ATCC 43914 / DSM 3382 / VKM B-1955 / HRM2) (Desulfobacterium autotrophicum).